The primary structure comprises 1508 residues: MGQEPRTLPPSPNWYCARCSDAVPGGLFGFAARTSVFLVRVGPGAGESPGTPPFRVIGELVGHTERVSGFTFSHHPGQYNLCATSSDDGTVKIWDVETKTVVTEHALHQHTISTLHWSPRVKDLIVSGDEKGVVFCYWFNRNDSQHLFIEPRTIFCLTCSPHHEDLVAIGYKDGIVVIIDISKKGEVIHRLRGHDDEIHSIAWCPLPGEDCLSINQEETSEEAEITNGNAVAQAPVTKGCYLATGSKDQTIRIWSCSRGRGVMILKLPFLKRRGGGIDPTVKERLWLTLHWPSNQPTQLVSSCFGGELLQWDLTQSWRRKYTLFSASSEGQNHSRIVFNLCPLQTEDDKQLLLSTSMDRDVKCWDIATLECSWTLPSLGGFAYSLAFSSVDIGSLAIGVGDGMIRVWNTLSIKNNYDVKNFWQGVKSKVTALCWHPTKEGCLAFGTDDGKVGLYDTYSNKPPQISSTYHKKTVYTLAWGPPVPPMSLGGEGDRPSLALYSCGGEGIVLQHNPWKLSGEAFDINKLIRDTNSIKYKLPVHTEISWKADGKIMALGNEDGSIEIFQIPNLKLICTIQQHHKLVNTISWHHEHGSQPELSYLMASGSNNAVIYVHNLKTVIESSPESPVTITEPYRTLSGHTAKITSVAWSPHHDGRLVSASYDGTAQVWDALREEPLCNFRGHRGRLLCVAWSPLDPDCIYSGADDFCVHKWLTSMQDHSRPPQGKKSIELEKKRLSQPKAKPKKKKKPTLRTPVKLESIDGNEEESMKENSGPVENGVSDQEGEEQAREPELPCGLAPAVSREPVICTPVSSGFEKSKVTINNKVILLKKEPPKEKPETLIKKRKARSLLPLSTSLDHRSKEELHQDCLVLATAKHSRELNEDVSADVEERFHLGLFTDRATLYRMIDIEGKGHLENGHPELFHQLMLWKGDLKGVLQTAAERGELTDNLVAMAPAAGYHVWLWAVEAFAKQLCFQDQYVKAASHLLSIHKVYEAVELLKSNHFYREAIAIAKARLRPEDPVLKDLYLSWGTVLERDGHYAVAAKCYLGATCAYDAAKVLAKKGDAASLRTAAELAAIVGEDELSASLALRCAQELLLANNWVGAQEALQLHESLQGQRLVFCLLELLSRHLEEKQLSEGKSSSSYHTWNTGTEGPFVERVTAVWKSIFSLDTPEQYQEAFQKLQNIKYPSATNNTPAKQLLLHICHDLTLAVLSQQMASWDEAVQALLRAVVRSYDSGSFTIMQEVYSAFLPDGCDHLRDKLGDHQSPATPAFKSLEAFFLYGRLYEFWWSLSRPCPNSSVWVRAGHRTLSVEPSQQLDTASTEETDPETSQPEPNRPSELDLRLTEEGERMLSTFKELFSEKHASLQNSQRTVAEVQETLAEMIRQHQKSQLCKSTANGPDKNEPEVEAEQPLCSSQSQCKEEKNEPLSLPELTKRLTEANQRMAKFPESIKAWPFPDVLECCLVLLLIRSHFPGCLAQEMQQQAQELLQKYGNTKTYRRHCQTFCM.

The interval 1 to 124 (MGQEPRTLPP…LHWSPRVKDL (124 aa)) is important for interaction with U1 snRNA. Residues 13-15 (NWY) form an interaction with U4 snRNA region. S48 is modified (phosphoserine). T51 is subject to Phosphothreonine. 11 WD repeats span residues 62–104 (GHTE…VVTE), 107–148 (LHQH…QHLF), 150–189 (EPRT…EVIH), 193–264 (GHDD…GVMI), 280–321 (TVKE…RRKY), 333–374 (HSRI…CSWT), 377–417 (SLGG…NNYD), 424–464 (GVKS…PPQI), 468–509 (YHKK…IVLQ), 533–573 (KYKL…LICT), and 576–622 (QHHK…ESSP). S624 is modified (phosphoserine). WD repeat units follow at residues 637-677 (GHTA…PLCN) and 680-720 (GHRG…HSRP). Positions 715 to 790 (QDHSRPPQGK…EGEEQAREPE (76 aa)) are disordered. Residues 739–748 (AKPKKKKKPT) are compositionally biased toward basic residues. T751 carries the post-translational modification Phosphothreonine. A Glycyl lysine isopeptide (Lys-Gly) (interchain with G-Cter in SUMO2) cross-link involves residue K754. Phosphoserine is present on residues S757, S770, S778, and S847. Disordered stretches follow at residues 1313 to 1343 (EPSQ…ELDL) and 1389 to 1428 (QKSQ…KNEP). Positions 1362–1393 (EKHASLQNSQRTVAEVQETLAEMIRQHQKSQL) form a coiled coil. Residues 1390–1399 (KSQLCKSTAN) are compositionally biased toward polar residues.

Belongs to the WD repeat gemin-5 family. As to quaternary structure, part of the core SMN complex that contains SMN1, GEMIN2/SIP1, DDX20/GEMIN3, GEMIN4, GEMIN5, GEMIN6, GEMIN7, GEMIN8 and STRAP/UNRIP. Part of the SMN-Sm complex that contains SMN1, GEMIN2/SIP1, DDX20/GEMIN3, GEMIN4, GEMIN5, GEMIN6, GEMIN7, GEMIN8, STRAP/UNRIP and the Sm proteins SNRPB, SNRPD1, SNRPD2, SNRPD3, SNRPE, SNRPF and SNRPG. Interacts with GEMIN2; the interaction is direct. Interacts with SMN1, SNRPB, SNRPD1, SNRPD2, SNRPD3 and SNRPE; the interaction is direct. Interacts with cytosolic DDX20/GEMIN3 and GEMIN4. Interacts with SNRNP70 and HNRNPU. Identified in a complex with 80S ribosomes; binds to the 60S large ribosomal subunit. Interacts with the ribosomal subunits RPL3 and RPL4.

Its subcellular location is the nucleus. The protein localises to the nucleoplasm. It is found in the gem. The protein resides in the cytoplasm. The SMN complex catalyzes the assembly of small nuclear ribonucleoproteins (snRNPs), the building blocks of the spliceosome, and thereby plays an important role in the splicing of cellular pre-mRNAs. Most spliceosomal snRNPs contain a common set of Sm proteins SNRPB, SNRPD1, SNRPD2, SNRPD3, SNRPE, SNRPF and SNRPG that assemble in a heptameric protein ring on the Sm site of the small nuclear RNA to form the core snRNP (Sm core). In the cytosol, the Sm proteins SNRPD1, SNRPD2, SNRPE, SNRPF and SNRPG are trapped in an inactive 6S pICln-Sm complex by the chaperone CLNS1A that controls the assembly of the core snRNP. To assemble core snRNPs, the SMN complex accepts the trapped 5Sm proteins from CLNS1A forming an intermediate. Binding of snRNA inside 5Sm ultimately triggers eviction of the SMN complex, thereby allowing binding of SNRPD3 and SNRPB to complete assembly of the core snRNP. Within the SMN complex, GEMIN5 recognizes and delivers the small nuclear RNAs (snRNAs) to the SMN complex. Binds to the 7-methylguanosine cap of RNA molecules. Binds to the 3'-UTR of SMN1 mRNA and regulates its translation; does not affect mRNA stability. May play a role in the regulation of protein synthesis via its interaction with ribosomes. The sequence is that of Gem-associated protein 5 (GEMIN5) from Homo sapiens (Human).